A 966-amino-acid polypeptide reads, in one-letter code: Replication protein 1a (966 aa).

Residues 49–381 (RNKLSVAECD…VIINGQSIMS (333 aa)) are methyltransferase. In terms of domain architecture, Alphavirus-like MT spans 71 to 261 (NLTHEYTAPH…HDWKNLGSFL (191 aa)). Positions 660–815 (DKTCSCANAK…NIEYDKRDIV (156 aa)) constitute a (+)RNA virus helicase ATP-binding domain. The tract at residues 687 to 951 (MVDGVAGCGK…TRHKRTFEYL (265 aa)) is ATP-dependent helicase. 690 to 697 (GVAGCGKT) contributes to the ATP binding site. In terms of domain architecture, (+)RNA virus helicase C-terminal spans 816-966 (SKTFRCPQDV…GGDLISFYVT (151 aa)).

Belongs to the bromoviridae replication protein 1a family.

The protein resides in the host endoplasmic reticulum membrane. In terms of biological role, involved in the virus replication. Contains a helicase domain and a methyltransferase domain. The methyltransferase domain is probably involved in viral RNA capping. This is Replication protein 1a from Vicia faba (Broad bean).